The sequence spans 77 residues: Large ribosomal subunit protein uL29 (77 aa).

The protein belongs to the universal ribosomal protein uL29 family.

This Mycobacterium sp. (strain JLS) protein is Large ribosomal subunit protein uL29.